The chain runs to 99 residues: DNA-directed RNA polymerase subunit omega (99 aa).

The protein belongs to the RNA polymerase subunit omega family. As to quaternary structure, the RNAP catalytic core consists of 2 alpha, 1 beta, 1 beta' and 1 omega subunit. When a sigma factor is associated with the core the holoenzyme is formed, which can initiate transcription.

It carries out the reaction RNA(n) + a ribonucleoside 5'-triphosphate = RNA(n+1) + diphosphate. Promotes RNA polymerase assembly. Latches the N- and C-terminal regions of the beta' subunit thereby facilitating its interaction with the beta and alpha subunits. This chain is DNA-directed RNA polymerase subunit omega, found in Thermus thermophilus (strain ATCC BAA-163 / DSM 7039 / HB27).